We begin with the raw amino-acid sequence, 182 residues long: Large ribosomal subunit protein uL22 (182 aa).

Residues 159–182 (AAAKPKATAKKATGEKSKAKTKAN) are disordered.

It belongs to the universal ribosomal protein uL22 family. In terms of assembly, part of the 50S ribosomal subunit.

In terms of biological role, this protein binds specifically to 23S rRNA; its binding is stimulated by other ribosomal proteins, e.g. L4, L17, and L20. It is important during the early stages of 50S assembly. It makes multiple contacts with different domains of the 23S rRNA in the assembled 50S subunit and ribosome. Its function is as follows. The globular domain of the protein is located near the polypeptide exit tunnel on the outside of the subunit, while an extended beta-hairpin is found that lines the wall of the exit tunnel in the center of the 70S ribosome. The chain is Large ribosomal subunit protein uL22 from Cytophaga hutchinsonii (strain ATCC 33406 / DSM 1761 / CIP 103989 / NBRC 15051 / NCIMB 9469 / D465).